A 630-amino-acid chain; its full sequence is 1,4-alpha-glucan branching enzyme GlgB (630 aa).

The active-site Nucleophile is aspartate 311. Catalysis depends on glutamate 362, which acts as the Proton donor.

Belongs to the glycosyl hydrolase 13 family. GlgB subfamily. In terms of assembly, monomer.

The catalysed reaction is Transfers a segment of a (1-&gt;4)-alpha-D-glucan chain to a primary hydroxy group in a similar glucan chain.. Its pathway is glycan biosynthesis; glycogen biosynthesis. Functionally, catalyzes the formation of the alpha-1,6-glucosidic linkages in glycogen by scission of a 1,4-alpha-linked oligosaccharide from growing alpha-1,4-glucan chains and the subsequent attachment of the oligosaccharide to the alpha-1,6 position. The protein is 1,4-alpha-glucan branching enzyme GlgB of Aquifex aeolicus (strain VF5).